The chain runs to 186 residues: T-cell receptor-associated transmembrane adapter 1 (186 aa).

Over 1–7 (MSGISGC) the chain is Extracellular. The helical; Signal-anchor for type III membrane protein transmembrane segment at 8 to 28 (PFFLWGLLALLGLALVISLIF) threads the bilayer. Topologically, residues 29–186 (NISHYVEKQR…LIRAKREPIN (158 aa)) are cytoplasmic. Residue Ser-46 is modified to Phosphoserine. A Phosphotyrosine modification is found at Tyr-79. The interval 79-82 (YEQM) is interaction with PIK3R1. Residues 116 to 140 (SVKGKRRKPRKQNTHFSDKDGDEQL) are disordered. Positions 118–128 (KGKRRKPRKQN) are enriched in basic residues. The segment covering 131–140 (FSDKDGDEQL) has biased composition (basic and acidic residues).

In terms of assembly, homodimer; disulfide-linked. Interacts with CD3Z. When phosphorylated, interacts with PIK3R1. In terms of processing, phosphorylated on tyrosines by LCK or FYN upon TCR activation. In terms of tissue distribution, strongly expressed in thymus, and to a lesser extent in spleen, lymph node and peripheral blood lymphocytes. Present in T-cells and NK cells, but not B-cells (at protein level).

Its subcellular location is the cell membrane. Functionally, stabilizes the TCR (T-cell antigen receptor)/CD3 complex at the surface of T-cells. The polypeptide is T-cell receptor-associated transmembrane adapter 1 (TRAT1) (Homo sapiens (Human)).